The primary structure comprises 681 residues: Epithelial splicing regulatory protein 1 (681 aa).

RRM domains lie at 225 to 302 (TVVR…KATG), 326 to 406 (VIVR…RSTA), and 445 to 525 (DCIR…QCSA). Serine 543 bears the Phosphoserine mark. At arginine 582 the chain carries Omega-N-methylarginine.

It belongs to the ESRP family. As to expression, epithelial cell-specific.

The protein resides in the nucleus. MRNA splicing factor that regulates the formation of epithelial cell-specific isoforms. Specifically regulates the expression of FGFR2-IIIb, an epithelial cell-specific isoform of FGFR2. Also regulates the splicing of CD44, CTNND1, ENAH, 3 transcripts that undergo changes in splicing during the epithelial-to-mesenchymal transition (EMT). Acts by directly binding specific sequences in mRNAs. Binds the GU-rich sequence motifs in the ISE/ISS-3, a cis-element regulatory region present in the mRNA of FGFR2. Regulates splicing and expression of genes involved in inner ear development, auditory hair cell differentiation, and cell fate specification in the cochlear epithelium. The protein is Epithelial splicing regulatory protein 1 (ESRP1) of Homo sapiens (Human).